Here is a 453-residue protein sequence, read N- to C-terminus: Homogentisate 1,2-dioxygenase (453 aa).

Catalysis depends on His-306, which acts as the Proton acceptor. Fe cation is bound by residues His-349 and Glu-355. Tyr-364 and His-385 together coordinate homogentisate. His-385 serves as a coordination point for Fe cation.

This sequence belongs to the homogentisate dioxygenase family. As to quaternary structure, hexamer; dimer of trimers. Fe cation is required as a cofactor.

The enzyme catalyses homogentisate + O2 = 4-maleylacetoacetate + H(+). The protein operates within amino-acid degradation; L-phenylalanine degradation; acetoacetate and fumarate from L-phenylalanine: step 4/6. Involved in the catabolism of homogentisate (2,5-dihydroxyphenylacetate or 2,5-OH-PhAc), a central intermediate in the degradation of phenylalanine and tyrosine. Catalyzes the oxidative ring cleavage of the aromatic ring of homogentisate to yield maleylacetoacetate. This chain is Homogentisate 1,2-dioxygenase, found in Rhizobium johnstonii (strain DSM 114642 / LMG 32736 / 3841) (Rhizobium leguminosarum bv. viciae).